The sequence spans 91 residues: Small ribosomal subunit protein uS19 (91 aa).

It belongs to the universal ribosomal protein uS19 family.

Protein S19 forms a complex with S13 that binds strongly to the 16S ribosomal RNA. The sequence is that of Small ribosomal subunit protein uS19 from Trichodesmium erythraeum (strain IMS101).